A 357-amino-acid polypeptide reads, in one-letter code: Peptide chain release factor 1 (357 aa).

Glutamine 233 bears the N5-methylglutamine mark.

Belongs to the prokaryotic/mitochondrial release factor family. In terms of processing, methylated by PrmC. Methylation increases the termination efficiency of RF1.

Its subcellular location is the cytoplasm. Functionally, peptide chain release factor 1 directs the termination of translation in response to the peptide chain termination codons UAG and UAA. This chain is Peptide chain release factor 1, found in Syntrophus aciditrophicus (strain SB).